Consider the following 181-residue polypeptide: ATP synthase subunit b, chloroplastic (181 aa).

Residues 28–50 (IINLSVVLGVLIYFGKGVLSNLL) traverse the membrane as a helical segment.

This sequence belongs to the ATPase B chain family. As to quaternary structure, F-type ATPases have 2 components, F(1) - the catalytic core - and F(0) - the membrane proton channel. F(1) has five subunits: alpha(3), beta(3), gamma(1), delta(1), epsilon(1). F(0) has four main subunits: a(1), b(1), b'(1) and c(10-14). The alpha and beta chains form an alternating ring which encloses part of the gamma chain. F(1) is attached to F(0) by a central stalk formed by the gamma and epsilon chains, while a peripheral stalk is formed by the delta, b and b' chains.

The protein localises to the plastid. The protein resides in the chloroplast thylakoid membrane. In terms of biological role, f(1)F(0) ATP synthase produces ATP from ADP in the presence of a proton or sodium gradient. F-type ATPases consist of two structural domains, F(1) containing the extramembraneous catalytic core and F(0) containing the membrane proton channel, linked together by a central stalk and a peripheral stalk. During catalysis, ATP synthesis in the catalytic domain of F(1) is coupled via a rotary mechanism of the central stalk subunits to proton translocation. Component of the F(0) channel, it forms part of the peripheral stalk, linking F(1) to F(0). The chain is ATP synthase subunit b, chloroplastic from Cryptomeria japonica (Japanese cedar).